Consider the following 440-residue polypeptide: Putative short-chain fatty acid transporter (440 aa).

Topologically, residues 1 to 19 are periplasmic; it reads MIGRISRFMTRFVSRWLPD. Residues 20–40 traverse the membrane as a helical segment; the sequence is PLIFAMLLTLLTFVIALWLTP. The Cytoplasmic portion of the chain corresponds to 41 to 53; that stretch reads QTPISMVKMWGDG. Residues 54-74 traverse the membrane as a helical segment; sequence FWNLLAFGMQMALIIVTGHAL. Residues 75–102 lie on the Periplasmic side of the membrane; it reads ASSAPVKSLLRTAASAAKTPVQGVMLVT. The helical transmembrane segment at 103–123 threads the bilayer; the sequence is FFGSVACVINWGFGLVVGAMF. The Cytoplasmic segment spans residues 124–137; it reads AREVARRVPGSDYP. The next 2 helical transmembrane spans lie at 138 to 158 and 159 to 179; these read LLIA…SGSM and PLLA…IPVG. Position 180 (aspartate 180) is a topological domain, cytoplasmic. The helical transmembrane segment at 181-201 threads the bilayer; the sequence is TLFSGFNIFITVALIVVMPFI. Over 202-244 the chain is Periplasmic; sequence TRMMMPKPSDVVSIDPKLLMEEADFQKQLPKDAPPSERLEESR. 2 helical membrane-spanning segments follow: residues 245–265 and 266–286; these read ILTL…FSEH and GFNI…LLLH. The Periplasmic portion of the chain corresponds to 287–313; it reads KTPMAYMRAISAAARSTAGILVQFPFY. A helical transmembrane segment spans residues 314–334; the sequence is AGIQLMMEHSGLGGLITEFFI. Residues 335–351 are Cytoplasmic-facing; that stretch reads NVANKDTFPVMTFFSSA. A helical transmembrane segment spans residues 352-372; the sequence is LINFAVPSGGGHWVIQGPFVI. Over 373–394 the chain is Periplasmic; the sequence is PAAQALGADLGKSVMAIAYGEQ. A helical membrane pass occupies residues 395–415; that stretch reads WMNMAQPFWALPALAIAGLGV. At 416 to 419 the chain is on the cytoplasmic side; it reads RDIM. The helical transmembrane segment at 420–440 threads the bilayer; sequence GYCITALLFSGVIFVIGLTLF.

It is found in the cell inner membrane. Functionally, may be responsible for the uptake of short-chain fatty acids. This is Putative short-chain fatty acid transporter (atoE) from Escherichia coli (strain K12).